A 667-amino-acid polypeptide reads, in one-letter code: DNA ligase (667 aa).

Residues 32-36 (DSEYD), 81-82 (SL), and Glu-110 each bind NAD(+). Catalysis depends on Lys-112, which acts as the N6-AMP-lysine intermediate. 4 residues coordinate NAD(+): Arg-133, Glu-167, Lys-283, and Lys-307. Positions 401, 404, 419, and 424 each coordinate Zn(2+). In terms of domain architecture, BRCT spans 586–667 (EGHPEFSGKT…FVDKQNELNS (82 aa)).

The protein belongs to the NAD-dependent DNA ligase family. LigA subfamily. The cofactor is Mg(2+). Mn(2+) is required as a cofactor.

It carries out the reaction NAD(+) + (deoxyribonucleotide)n-3'-hydroxyl + 5'-phospho-(deoxyribonucleotide)m = (deoxyribonucleotide)n+m + AMP + beta-nicotinamide D-nucleotide.. DNA ligase that catalyzes the formation of phosphodiester linkages between 5'-phosphoryl and 3'-hydroxyl groups in double-stranded DNA using NAD as a coenzyme and as the energy source for the reaction. It is essential for DNA replication and repair of damaged DNA. The sequence is that of DNA ligase from Staphylococcus aureus (strain bovine RF122 / ET3-1).